A 124-amino-acid polypeptide reads, in one-letter code: MMKINNLPRLIRTFLPATLLMLPLVWQTPALAQSASCTQGSTCVSVGGNNDPMSKEQARQSQQQWDETNRLRNKMNNRVEKDFDKNDRAVDAKDNCERSDNLNAYWEPNTQRCLDRLSGRKINP.

The N-terminal stretch at 1–32 (MMKINNLPRLIRTFLPATLLMLPLVWQTPALA) is a signal peptide. The disordered stretch occupies residues 47-68 (GGNNDPMSKEQARQSQQQWDET).

Belongs to the UPF0482 family.

The chain is UPF0482 protein YpsIP31758_1865 from Yersinia pseudotuberculosis serotype O:1b (strain IP 31758).